We begin with the raw amino-acid sequence, 334 residues long: MRWYPWLRPDFEKLVASYQAGRGHHALLIQALPGMGDDALIYALSRYLLCQQPQGHKSCGHCRGCQLMQAGTHPDYYTLAPEKGKNTLGVDAVREVTEKLNEHARLGGAKVVWVTDAALLTDAAANALLKTLEEPPAETWFFLATREPERLLATLRSRCRLHYLAPPPEQYAVTWLSREVTMSQDALLAALRLSAGSPGAALALFQGDNWQARETLCQALAYSVPSGDWYSLLAALNHEQAPARLHWLATLLMDALKRHHGAAQVTNVDVPGLVAELANHLSPSRLQAILGDVCHIREQLMSVTGINRELLITDLLLRIEHYLQPGVVLPVPHL.

In terms of assembly, the DNA polymerase III holoenzyme complex contains at least 10 different subunits organized into 3 functionally essential subassemblies: the Pol III core, the beta sliding clamp processivity factor and the clamp-loading complex. The Pol III core (subunits alpha, epsilon and theta) contains the polymerase and the 3'-5' exonuclease proofreading activities. The polymerase is tethered to the template via the dimeric beta sliding clamp processivity factor. The clamp-loading complex (also called gamma complex) assembles the beta sliding clamp onto the primed template and plays a central role in the organization and communication at the replication fork. The clamp-loading complex contains delta, delta', psi and chi, and 3 copies of either or both of two different DnaX proteins, gamma and tau. The DNA replisome complex has a single clamp loader (3 tau and 1 each of delta, delta', psi and chi subunits) which binds 3 Pol III cores (1 core on the leading strand and 2 on the lagging strand) each with a beta sliding clamp dimer. Additional proteins in the replisome are other copies of gamma, psi and chi, Ssb, DNA helicase and RNA primase. The clamp loader hydrolyzes ATP to assemble the beta processivity factor onto the primed template and plays a central role in the organization and communication at the replication fork; the minimal complex to load the beta sliding clamp on DNA is delta, delta', gamma.

It carries out the reaction DNA(n) + a 2'-deoxyribonucleoside 5'-triphosphate = DNA(n+1) + diphosphate. Its function is as follows. Part of the beta sliding clamp loading complex, which hydrolyzes ATP to load the beta clamp onto primed DNA to form the DNA replication pre-initiation complex. DNA polymerase III is a complex, multichain enzyme responsible for most of the replicative synthesis in bacteria. This DNA polymerase also exhibits 3' to 5' exonuclease activity. The gamma complex (gamma(3),delta,delta') is thought to load beta dimers onto DNA by binding ATP which alters the complex's conformation so it can bind beta sliding clamp dimers and open them at one interface. Primed DNA is recognized, ATP is hydrolyzed releasing the gamma complex and closing the beta sliding clamp ring around the primed DNA. In Escherichia coli (strain K12), this protein is DNA polymerase III subunit delta' (holB).